Consider the following 86-residue polypeptide: Small ribosomal subunit protein uS17 (86 aa).

It belongs to the universal ribosomal protein uS17 family. Part of the 30S ribosomal subunit.

In terms of biological role, one of the primary rRNA binding proteins, it binds specifically to the 5'-end of 16S ribosomal RNA. The chain is Small ribosomal subunit protein uS17 from Chlamydia pneumoniae (Chlamydophila pneumoniae).